The primary structure comprises 52 residues: uncharacterized protein (52 aa).

The segment at 24–52 is disordered; the sequence is LRENPSKNVRTIPDAGDENSSFGHARVIA.

This is an uncharacterized protein from Treponema pallidum (strain Nichols).